The sequence spans 336 residues: Transmembrane protein 19 (336 aa).

The next 6 membrane-spanning stretches (helical) occupy residues 15-35 (MITN…FWII), 49-69 (ISPW…SNGL), 84-104 (VVGF…LMFF), 218-238 (VTVV…IAYF), 257-277 (IIAF…YLGA), and 313-333 (VNLF…WGFW).

The protein belongs to the TMEM19 family.

It is found in the membrane. This Homo sapiens (Human) protein is Transmembrane protein 19 (TMEM19).